A 144-amino-acid chain; its full sequence is Large ribosomal subunit protein uL15 (144 aa).

The disordered stretch occupies residues 1-58 (MQLNDLRSAPGARREKLRPGRGIGSGLGKTGGRGHKGQTSRSGGKIAPGFEGGQQPLH). Gly residues predominate over residues 21–31 (RGIGSGLGKTG).

It belongs to the universal ribosomal protein uL15 family. As to quaternary structure, part of the 50S ribosomal subunit.

Functionally, binds to the 23S rRNA. This is Large ribosomal subunit protein uL15 from Azotobacter vinelandii (strain DJ / ATCC BAA-1303).